A 97-amino-acid chain; its full sequence is Exodeoxyribonuclease 7 small subunit (97 aa).

The disordered stretch occupies residues 1–22 (MAKTASPGATPPDNGTEPLPDN).

Belongs to the XseB family. Heterooligomer composed of large and small subunits.

Its subcellular location is the cytoplasm. The catalysed reaction is Exonucleolytic cleavage in either 5'- to 3'- or 3'- to 5'-direction to yield nucleoside 5'-phosphates.. Its function is as follows. Bidirectionally degrades single-stranded DNA into large acid-insoluble oligonucleotides, which are then degraded further into small acid-soluble oligonucleotides. The polypeptide is Exodeoxyribonuclease 7 small subunit (Burkholderia ambifaria (strain MC40-6)).